We begin with the raw amino-acid sequence, 366 residues long: Fructose-bisphosphate aldolase 2 (366 aa).

Residues Arg-60 and Lys-150 each contribute to the substrate site. The active-site Proton acceptor is Glu-191. The active-site Schiff-base intermediate with dihydroxyacetone-P is Lys-233.

Belongs to the class I fructose-bisphosphate aldolase family.

It carries out the reaction beta-D-fructose 1,6-bisphosphate = D-glyceraldehyde 3-phosphate + dihydroxyacetone phosphate. The protein operates within carbohydrate degradation; glycolysis; D-glyceraldehyde 3-phosphate and glycerone phosphate from D-glucose: step 4/4. In Caenorhabditis elegans, this protein is Fructose-bisphosphate aldolase 2 (aldo-2).